The following is a 345-amino-acid chain: Methionine import ATP-binding protein MetN 4 (345 aa).

The region spanning 2–241 is the ABC transporter domain; that stretch reads IELTNITKTF…PQLRTTKRFV (240 aa). 38–45 contributes to the ATP binding site; it reads GYSGAGKS.

Belongs to the ABC transporter superfamily. Methionine importer (TC 3.A.1.24) family. As to quaternary structure, the complex is composed of two ATP-binding proteins (MetN), two transmembrane proteins (MetI) and a solute-binding protein (MetQ).

The protein resides in the cell membrane. It catalyses the reaction L-methionine(out) + ATP + H2O = L-methionine(in) + ADP + phosphate + H(+). The catalysed reaction is D-methionine(out) + ATP + H2O = D-methionine(in) + ADP + phosphate + H(+). Its function is as follows. Part of the ABC transporter complex MetNIQ involved in methionine import. Responsible for energy coupling to the transport system. The protein is Methionine import ATP-binding protein MetN 4 of Oceanobacillus iheyensis (strain DSM 14371 / CIP 107618 / JCM 11309 / KCTC 3954 / HTE831).